The following is an 87-amino-acid chain: Small ribosomal subunit protein bS20 (87 aa).

The protein belongs to the bacterial ribosomal protein bS20 family.

Binds directly to 16S ribosomal RNA. The polypeptide is Small ribosomal subunit protein bS20 (Clostridium perfringens (strain 13 / Type A)).